A 56-amino-acid polypeptide reads, in one-letter code: Large ribosomal subunit protein uL30 (56 aa).

Belongs to the universal ribosomal protein uL30 family. Part of the 50S ribosomal subunit.

This is Large ribosomal subunit protein uL30 from Nitratidesulfovibrio vulgaris (strain DSM 19637 / Miyazaki F) (Desulfovibrio vulgaris).